The following is a 128-amino-acid chain: MSAKTDEILESLKSLSLLEASELVKQIEDAFGVSAAASAGVVMAAPGAAGGGDAAEEKTEFDVVLESFDAAAKIKVLKAVREATGLGLGDAKAMVEAAPKAIKEGVSKDDAEALKKAIEEVGGKVTIK.

It belongs to the bacterial ribosomal protein bL12 family. As to quaternary structure, homodimer. Part of the ribosomal stalk of the 50S ribosomal subunit. Forms a multimeric L10(L12)X complex, where L10 forms an elongated spine to which 2 to 4 L12 dimers bind in a sequential fashion. Binds GTP-bound translation factors.

Functionally, forms part of the ribosomal stalk which helps the ribosome interact with GTP-bound translation factors. Is thus essential for accurate translation. The protein is Large ribosomal subunit protein bL12 of Synechococcus sp. (strain CC9311).